The sequence spans 672 residues: Beta-galactosidase BgaB (672 aa).

Position 109 (arginine 109) interacts with substrate. Position 113 (cysteine 113) interacts with Zn(2+). Asparagine 147 is a binding site for substrate. The Proton donor role is filled by glutamate 148. Zn(2+) is bound by residues cysteine 156, cysteine 158, and cysteine 161. The active-site Nucleophile is the glutamate 303. Substrate contacts are provided by residues tryptophan 311 and glutamate 351–histidine 354.

Belongs to the glycosyl hydrolase 42 family.

The catalysed reaction is Hydrolysis of terminal non-reducing beta-D-galactose residues in beta-D-galactosides.. The protein is Beta-galactosidase BgaB of Geobacillus sp. (strain Y412MC61).